We begin with the raw amino-acid sequence, 344 residues long: Heat-inducible transcription repressor HrcA (344 aa).

Belongs to the HrcA family.

Negative regulator of class I heat shock genes (grpE-dnaK-dnaJ and groELS operons). Prevents heat-shock induction of these operons. This chain is Heat-inducible transcription repressor HrcA, found in Streptococcus pneumoniae (strain ATCC 700669 / Spain 23F-1).